Here is a 205-residue protein sequence, read N- to C-terminus: Small ribosomal subunit protein uS4 (205 aa).

Residues 1 to 16 (MSKRETTKYKIDRRMG) show a composition bias toward basic and acidic residues. Positions 1-46 (MSKRETTKYKIDRRMGENIWGRPKSPVNRRDYGPGQHGQRRKGKLS) are disordered. In terms of domain architecture, S4 RNA-binding spans 94-157 (SRLDAVIYRA…KQLVLVLESV (64 aa)).

The protein belongs to the universal ribosomal protein uS4 family. Part of the 30S ribosomal subunit. Contacts protein S5. The interaction surface between S4 and S5 is involved in control of translational fidelity.

Functionally, one of the primary rRNA binding proteins, it binds directly to 16S rRNA where it nucleates assembly of the body of the 30S subunit. In terms of biological role, with S5 and S12 plays an important role in translational accuracy. This is Small ribosomal subunit protein uS4 from Bartonella quintana (strain Toulouse) (Rochalimaea quintana).